Here is a 407-residue protein sequence, read N- to C-terminus: Putative cell wall shaping protein YabE (407 aa).

The signal sequence occupies residues 1-31 (MKKLFSVKLSKSKVILVAACLLLAGSGTAYA). The G5 domain maps to 206–286 (ITRIEKVTDV…DKVIAVGTKQ (81 aa)).

Suggested to be involved in cell wall modification. This is Putative cell wall shaping protein YabE (yabE) from Bacillus subtilis (strain 168).